Here is a 522-residue protein sequence, read N- to C-terminus: Putative aminopeptidase W07G4.4 (522 aa).

Zn(2+)-binding residues include lysine 271 and aspartate 276. Lysine 283 is an active-site residue. Zn(2+)-binding residues include aspartate 294, aspartate 354, and glutamate 356. Arginine 358 is a catalytic residue.

The protein belongs to the peptidase M17 family. Requires Zn(2+) as cofactor.

This chain is Putative aminopeptidase W07G4.4 (lap-2), found in Caenorhabditis elegans.